The following is a 328-amino-acid chain: MPLHNLTRFPRLEFIGAPTPLEYLPRFSDYLGREIFIKRDEVTPMAMGGNKLRKLEFLAADALREGADTLITAGAIQSNHVRQTAAVAAKLGLHCVALLENPIGTTAENYLTNGNRLLLDLFNTQIEMCDALTDPNAQLEELATRVEAQGFRPYVIPVGGSNALGALGYVESALEIAQQCEGAVNISSVVVASGSAGTHAGLAVGLEHLMPESELIGVTVSRSVADQLPKVVNLQQAIAKELELTASAEILLWDDYFAPGYGVPNDEGMEAVKLLARLEGILLDPVYTGKAMAGLIDGISQKRFKDEGPILFIHTGGAPALFAYHPHV.

Position 51 is an N6-(pyridoxal phosphate)lysine (Lys51).

The protein belongs to the ACC deaminase/D-cysteine desulfhydrase family. Homodimer. Requires pyridoxal 5'-phosphate as cofactor.

The enzyme catalyses D-cysteine + H2O = hydrogen sulfide + pyruvate + NH4(+) + H(+). Functionally, catalyzes the alpha,beta-elimination reaction of D-cysteine and of several D-cysteine derivatives. It could be a defense mechanism against D-cysteine. In Shigella flexneri serotype 5b (strain 8401), this protein is D-cysteine desulfhydrase.